Here is a 330-residue protein sequence, read N- to C-terminus: G-protein coupled receptor 157 (330 aa).

Residues 1-15 lie on the Extracellular side of the membrane; that stretch reads MPSPAPPTELLPWER. Residues 16–36 traverse the membrane as a helical segment; the sequence is AVVLLSCALSALGSGLLVATH. Topologically, residues 37–48 are cytoplasmic; the sequence is ALWPDLRSRARR. The helical transmembrane segment at 49 to 69 threads the bilayer; it reads LLLFLSLADLLSAASYFYGVL. The Extracellular portion of the chain corresponds to 70-87; that stretch reads QDFAGTSWDCVLQGALST. The helical transmembrane segment at 88–108 threads the bilayer; the sequence is FANTSSFFWTVAIALYLYLSI. The Cytoplasmic segment spans residues 109-119; sequence VRTTRGPSTDH. A helical transmembrane segment spans residues 120–140; sequence LIWAFHLISWGVPLAITVAAV. At 141-166 the chain is on the extracellular side; sequence SLKKIGYDASDVSVGWCWINLEAEDR. The helical transmembrane segment at 167 to 187 threads the bilayer; that stretch reads VLWMLLTGKLWEMLAYILLPL. Residues 188 to 227 lie on the Cytoplasmic side of the membrane; the sequence is LYLLVRKHINRAHQALSEYRPICEGRQLQRGSSTSTADKK. A helical membrane pass occupies residues 228 to 248; that stretch reads LVLIPLIFICLRVWSTVRFVL. Residues 249-259 are Extracellular-facing; that stretch reads TLCGSPAVQTP. The helical transmembrane segment at 260 to 280 threads the bilayer; sequence VLVVLHGIGNTFQGGANCIMF. The Cytoplasmic segment spans residues 281–330; it reads VLCTRAVRTRLFSLCCCCPRPSTQSPPGAPTPPKIGESQESRRTPEVPST. Positions 301–330 are disordered; that stretch reads PSTQSPPGAPTPPKIGESQESRRTPEVPST. Positions 317-330 are enriched in basic and acidic residues; sequence ESQESRRTPEVPST.

It belongs to the G-protein coupled receptor 2 family. Expressed in the primary cilia of radial glial progenitors (RGPs) in the developing neocortex.

The protein resides in the cell projection. The protein localises to the cilium membrane. Functionally, orphan receptor that promotes neuronal differentiation of radial glial progenitors (RGPs). The activity of this receptor is mediated by a G(q)-protein that activates a phosphatidylinositol-calcium second messenger. This is G-protein coupled receptor 157 (Gpr157) from Mus musculus (Mouse).